Consider the following 257-residue polypeptide: Geranylgeranylglyceryl phosphate synthase (257 aa).

Mg(2+) is bound by residues Asp-27 and Thr-57. Sn-glycerol 1-phosphate is bound by residues 175–181 (YLEAGSG), 207–208 (GG), and 229–230 (GN).

This sequence belongs to the GGGP/HepGP synthase family. Group II subfamily. Mg(2+) serves as cofactor.

It localises to the cytoplasm. The enzyme catalyses sn-glycerol 1-phosphate + (2E,6E,10E)-geranylgeranyl diphosphate = sn-3-O-(geranylgeranyl)glycerol 1-phosphate + diphosphate. Its pathway is membrane lipid metabolism; glycerophospholipid metabolism. Prenyltransferase that catalyzes the transfer of the geranylgeranyl moiety of geranylgeranyl diphosphate (GGPP) to the C3 hydroxyl of sn-glycerol-1-phosphate (G1P). This reaction is the first ether-bond-formation step in the biosynthesis of archaeal membrane lipids. This chain is Geranylgeranylglyceryl phosphate synthase, found in Sulfolobus acidocaldarius (strain ATCC 33909 / DSM 639 / JCM 8929 / NBRC 15157 / NCIMB 11770).